The primary structure comprises 186 residues: Translation initiation factor IF-3 (186 aa).

Belongs to the IF-3 family. As to quaternary structure, monomer.

It localises to the cytoplasm. Functionally, IF-3 binds to the 30S ribosomal subunit and shifts the equilibrium between 70S ribosomes and their 50S and 30S subunits in favor of the free subunits, thus enhancing the availability of 30S subunits on which protein synthesis initiation begins. In Chlamydia muridarum (strain MoPn / Nigg), this protein is Translation initiation factor IF-3.